The sequence spans 184 residues: Alpha-tubulin N-acetyltransferase (184 aa).

In terms of domain architecture, N-acetyltransferase spans 1-170 (METFNHIDIK…NHFVIFSNYF (170 aa)). Acetyl-CoA is bound by residues 104-117 (FYIL…GLGI) and 140-149 (SYKLQNFLKK).

Belongs to the acetyltransferase ATAT1 family.

It carries out the reaction L-lysyl-[alpha-tubulin] + acetyl-CoA = N(6)-acetyl-L-lysyl-[alpha-tubulin] + CoA + H(+). Its function is as follows. Specifically acetylates 'Lys-40' in alpha-tubulin on the lumenal side of microtubules. Promotes microtubule destabilization and accelerates microtubule dynamics; this activity may be independent of acetylation activity. Acetylates alpha-tubulin with a slow enzymatic rate, due to a catalytic site that is not optimized for acetyl transfer. Enters the microtubule through each end and diffuses quickly throughout the lumen of microtubules. Acetylates only long/old microtubules because of its slow acetylation rate since it does not have time to act on dynamically unstable microtubules before the enzyme is released. The polypeptide is Alpha-tubulin N-acetyltransferase (Plasmodium falciparum (isolate 3D7)).